The sequence spans 344 residues: Methionine import ATP-binding protein MetN (344 aa).

Positions 2–241 constitute an ABC transporter domain; that stretch reads IEINRVNKIF…PKTALAQEFI (240 aa). 38 to 45 provides a ligand contact to ATP; sequence GSSGAGKS.

Belongs to the ABC transporter superfamily. Methionine importer (TC 3.A.1.24) family. The complex is composed of two ATP-binding proteins (MetN), two transmembrane proteins (MetI) and a solute-binding protein (MetQ).

It localises to the cell inner membrane. The catalysed reaction is L-methionine(out) + ATP + H2O = L-methionine(in) + ADP + phosphate + H(+). It catalyses the reaction D-methionine(out) + ATP + H2O = D-methionine(in) + ADP + phosphate + H(+). Functionally, part of the ABC transporter complex MetNIQ involved in methionine import. Responsible for energy coupling to the transport system. This Aliivibrio fischeri (strain ATCC 700601 / ES114) (Vibrio fischeri) protein is Methionine import ATP-binding protein MetN.